A 427-amino-acid chain; its full sequence is Nucleolar and spindle-associated protein 1 (427 aa).

The segment at 41–190 is disordered; it reads AHLNPETRKE…LGNNKRTSAT (150 aa). Positions 43–55 are enriched in basic and acidic residues; the sequence is LNPETRKENKNQD. The span at 83–96 shows a compositional bias: basic residues; it reads TKTRRRRRKKHKTI. Positions 119–128 are enriched in low complexity; it reads NFQNQENQEN. Serine 139 is modified (phosphoserine). The span at 159-179 shows a compositional bias: basic and acidic residues; sequence NDIKDSKKPLEKRSLCTDEFS. A compositionally biased stretch (polar residues) spans 181–190; that stretch reads LGNNKRTSAT. A Phosphothreonine modification is found at threonine 191. Positions 235–312 are disordered; sequence IVTPVPPRGR…QAVFRTPKSK (78 aa). Residues 243-367 form an interaction with microtubules region; sequence GRLSVPCTPA…HKGKLKPWGQ (125 aa). Serine 246 is subject to Phosphoserine. Threonine 250 carries the post-translational modification Phosphothreonine. Positions 252-264 are enriched in polar residues; the sequence is ARQQCPQGHSATK. At serine 261 the chain carries Phosphoserine. Phosphothreonine is present on residues threonine 323 and threonine 334. 2 positions are modified to phosphoserine: serine 337 and serine 348. The disordered stretch occupies residues 354–427; that stretch reads NYKPHKGKLK…RRNLGVTKAQ (74 aa). Residues 369-375 carry the KEN box motif; the sequence is KENNSLN. Positions 393–425 form a coiled coil; sequence LQTREERWKRQEQERKEKKEKLLEARRNLGVTK. The segment covering 394-419 has biased composition (basic and acidic residues); that stretch reads QTREERWKRQEQERKEKKEKLLEARR.

This sequence belongs to the NUSAP family. Interacts with DNA and microtubules. Microtubule bundling is inhibited by IPO7, KPNA2 and KPNB1 while association with DNA is also inhibited by IPO7 and KPNA2. Post-translationally, ubiquitinated. Ubiquitination by FZR1 may lead to proteasome-dependent degradation of this protein.

Its subcellular location is the cytoplasm. The protein localises to the nucleus. The protein resides in the nucleolus. It localises to the cytoskeleton. It is found in the spindle. Its subcellular location is the chromosome. Its function is as follows. Microtubule-associated protein with the capacity to bundle and stabilize microtubules. May associate with chromosomes and promote the organization of mitotic spindle microtubules around them. In Mus musculus (Mouse), this protein is Nucleolar and spindle-associated protein 1 (Nusap1).